Reading from the N-terminus, the 196-residue chain is Corrinoid adenosyltransferase (196 aa).

36–42 (GNGKGKT) lines the ATP pocket.

The protein belongs to the Cob(I)alamin adenosyltransferase family.

Its subcellular location is the cytoplasm. It carries out the reaction 2 cob(II)yrinate a,c diamide + reduced [electron-transfer flavoprotein] + 2 ATP = 2 adenosylcob(III)yrinate a,c-diamide + 2 triphosphate + oxidized [electron-transfer flavoprotein] + 3 H(+). The enzyme catalyses 2 cob(II)alamin + reduced [electron-transfer flavoprotein] + 2 ATP = 2 adenosylcob(III)alamin + 2 triphosphate + oxidized [electron-transfer flavoprotein] + 3 H(+). Its pathway is cofactor biosynthesis; adenosylcobalamin biosynthesis; adenosylcobalamin from cob(II)yrinate a,c-diamide: step 2/7. In terms of biological role, required for both de novo synthesis of the corrin ring for the assimilation of exogenous corrinoids. Participates in the adenosylation of a variety of incomplete and complete corrinoids. The sequence is that of Corrinoid adenosyltransferase (btuR) from Escherichia coli O6:H1 (strain CFT073 / ATCC 700928 / UPEC).